Here is a 20-residue protein sequence, read N- to C-terminus: Equinatoxin-1 (20 aa).

Positions 3–12 are plays an important role in the hemolytic activity; it reads AVAGAVIEGA. The tract at residues 11-20 is N-terminal region; the sequence is GASLTFNVLQ.

It belongs to the actinoporin family. Sea anemone subfamily. As to quaternary structure, octamer or nonamer in membranes. Monomer in the soluble state.

It localises to the secreted. The protein resides in the nematocyst. It is found in the target cell membrane. Functionally, pore-forming protein that forms cations-selective hydrophilic pores of around 1 nm and causes cardiac stimulation and cytolysis. Pore formation is a multi-step process that involves specific recognition of membrane sphingomyelin (but neither cholesterol nor phosphatidylcholine) using aromatic rich region and adjacent phosphocholine (POC) binding site, firm binding to the membrane (mainly driven by hydrophobic interactions) accompanied by the transfer of the N-terminal region to the lipid-water interface and finally pore formation after oligomerization of monomers. Cytolytic effects include red blood cells hemolysis, platelet aggregation and lysis, cytotoxic and cytostatic effects on fibroblasts. Lethality in mammals has been ascribed to severe vasospasm of coronary vessels, cardiac arrhythmia, and inotropic effects. This Actinia equina (Beadlet anemone) protein is Equinatoxin-1.